Consider the following 3919-residue polypeptide: Intermembrane lipid transfer protein Vps13D (3919 aa).

The 111-residue stretch at 4–114 (DLITWVLNTY…QDLEYKLAVL (111 aa)) folds into the Chorein N-terminal domain. Residues 706-736 (TSDDDETYLTPCSTPPASEKSGSESPTLLEN) are disordered. The 43-residue stretch at 2292–2334 (KADSDLEKAAPLVAMGFEISDCLYAMQINNWRINDAAIWLSQQ) folds into the UBA domain. The SHR-BD domain occupies 2837-3113 (ELYISAPVWI…YVMDDPLGQQ (277 aa)). The interval 3749 to 3768 (VRETSRDSHRNAPERKRLPR) is disordered. Positions 3751-3764 (ETSRDSHRNAPERK) are enriched in basic and acidic residues.

The protein belongs to the VPS13 family. As to expression, expressed in intestinal cells (at protein level).

It is found in the cytoplasm. The protein localises to the lysosome. Its function is as follows. Mediates the transfer of lipids between membranes at organelle contact sites. Functions in promoting mitochondrial clearance by mitochondrial autophagy (mitophagy), also possibly by positively regulating mitochondrial fission. Mitophagy plays an important role in regulating cell health and mitochondrial size and homeostasis. This is Intermembrane lipid transfer protein Vps13D from Drosophila melanogaster (Fruit fly).